A 193-amino-acid polypeptide reads, in one-letter code: dCTP deaminase, dUMP-forming (193 aa).

DCTP contacts are provided by residues 101 to 106, Asp-119, 127 to 129, Gln-148, Tyr-162, and Gln-174; these read KSSLGR and TLE. The active-site Proton donor/acceptor is the Glu-129.

The protein belongs to the dCTP deaminase family. In terms of assembly, homotrimer.

It carries out the reaction dCTP + 2 H2O = dUMP + NH4(+) + diphosphate. Its pathway is pyrimidine metabolism; dUMP biosynthesis; dUMP from dCTP: step 1/1. In terms of biological role, bifunctional enzyme that catalyzes both the deamination of dCTP to dUTP and the hydrolysis of dUTP to dUMP without releasing the toxic dUTP intermediate. This Bifidobacterium adolescentis (strain ATCC 15703 / DSM 20083 / NCTC 11814 / E194a) protein is dCTP deaminase, dUMP-forming.